A 976-amino-acid chain; its full sequence is Vacuolar membrane protease (976 aa).

Residues 1–15 are Cytoplasmic-facing; the sequence is MKLKSVFRSVLKYRK. Residues 16 to 36 traverse the membrane as a helical segment; the sequence is TNLSLLLLITYSIITLLYIFD. Over 37–359 the chain is Vacuolar; that stretch reads HERYKLNLPK…KFFVISAKTL (323 aa). N-linked (GlcNAc...) asparagine glycans are attached at residues asparagine 96 and asparagine 121. Residues histidine 156 and aspartate 168 each coordinate Zn(2+). N-linked (GlcNAc...) asparagine glycosylation is present at asparagine 189. Catalysis depends on glutamate 200, which acts as the Proton acceptor. A Zn(2+)-binding site is contributed by glutamate 201. N-linked (GlcNAc...) asparagine glycosylation is found at asparagine 212 and asparagine 217. Residues glutamate 226 and histidine 300 each coordinate Zn(2+). A helical transmembrane segment spans residues 360–380; the sequence is FYWNCIFLLVSPVVAIGLYLI. Topologically, residues 381–392 are cytoplasmic; that stretch reads SRDRMTWKSHSW. A helical membrane pass occupies residues 393-412; it reads LSWTRFPLSLAAGIIVQKLF. Over 413–428 the chain is Vacuolar; that stretch reads SNDIIRSNPLTFSRNY. A helical membrane pass occupies residues 429-449; it reads FWPISAFFTQVIFTSYVLINC. Topologically, residues 450–461 are cytoplasmic; it reads SNFFFPCADMKS. The chain crosses the membrane as a helical span at residues 462–482; that stretch reads LSIIELFIILWTILLFTSKLL. Residues 483-496 are Vacuolar-facing; sequence YSSDYRYTGLYPLS. Residues 497–517 traverse the membrane as a helical segment; the sequence is IFFLLSTIAAILRLLALALGM. The Cytoplasmic portion of the chain corresponds to 518–627; it reads RTRKRLGREC…NSLKLEYTDY (110 aa). The segment at 528 to 610 is disordered; it reads RDHHSNYSSH…PLLKGSNSME (83 aa). The span at 549–558 shows a compositional bias: polar residues; sequence NLEQPQDQFT. The segment covering 559 to 570 has biased composition (low complexity); sequence SSQDDQASIQDD. Basic and acidic residues predominate over residues 582 to 601; the sequence is NVDEDHGMDSSSQQHDERVP. Residues 628-648 traverse the membrane as a helical segment; sequence AWIIQFLLIVPIPSFILFNSV. Topologically, residues 649–668 are vacuolar; it reads DVIMDALNHTVQEGSKATFD. N-linked (GlcNAc...) asparagine glycosylation is present at asparagine 656. A helical membrane pass occupies residues 669 to 689; that stretch reads VLRFGMVGSILMALPILPFFY. Residues 690–692 are Cytoplasmic-facing; it reads KVN. A helical transmembrane segment spans residues 693 to 713; the sequence is YITISLTALLFLISASKTLLV. Residues 714-976 are Vacuolar-facing; it reads HPFTNSNPLK…LVIVKDAIIL (263 aa). Asparagine 768, asparagine 796, asparagine 811, asparagine 866, and asparagine 937 each carry an N-linked (GlcNAc...) asparagine glycan.

The protein belongs to the peptidase M28 family. Zn(2+) serves as cofactor.

It is found in the vacuole membrane. In terms of biological role, may be involved in vacuolar sorting and osmoregulation. The sequence is that of Vacuolar membrane protease from Saccharomyces cerevisiae (strain YJM789) (Baker's yeast).